The sequence spans 272 residues: Formamidopyrimidine-DNA glycosylase (272 aa).

Proline 2 functions as the Schiff-base intermediate with DNA in the catalytic mechanism. The Proton donor role is filled by glutamate 3. The active-site Proton donor; for beta-elimination activity is the lysine 58. DNA contacts are provided by histidine 94, arginine 112, and arginine 153. An FPG-type zinc finger spans residues 238–272 (FVYDRAGEPCRVCGAPIRQIVQGQRSTYFCPNCQR). Arginine 262 serves as the catalytic Proton donor; for delta-elimination activity.

It belongs to the FPG family. Monomer. Zn(2+) is required as a cofactor.

It carries out the reaction Hydrolysis of DNA containing ring-opened 7-methylguanine residues, releasing 2,6-diamino-4-hydroxy-5-(N-methyl)formamidopyrimidine.. It catalyses the reaction 2'-deoxyribonucleotide-(2'-deoxyribose 5'-phosphate)-2'-deoxyribonucleotide-DNA = a 3'-end 2'-deoxyribonucleotide-(2,3-dehydro-2,3-deoxyribose 5'-phosphate)-DNA + a 5'-end 5'-phospho-2'-deoxyribonucleoside-DNA + H(+). Involved in base excision repair of DNA damaged by oxidation or by mutagenic agents. Acts as a DNA glycosylase that recognizes and removes damaged bases. Has a preference for oxidized purines, such as 7,8-dihydro-8-oxoguanine (8-oxoG). Has AP (apurinic/apyrimidinic) lyase activity and introduces nicks in the DNA strand. Cleaves the DNA backbone by beta-delta elimination to generate a single-strand break at the site of the removed base with both 3'- and 5'-phosphates. The protein is Formamidopyrimidine-DNA glycosylase of Burkholderia mallei (strain NCTC 10229).